Reading from the N-terminus, the 141-residue chain is Large ribosomal subunit protein uL16 (141 aa).

The protein belongs to the universal ribosomal protein uL16 family. Part of the 50S ribosomal subunit.

In terms of biological role, binds 23S rRNA and is also seen to make contacts with the A and possibly P site tRNAs. The sequence is that of Large ribosomal subunit protein uL16 from Sulfurimonas denitrificans (strain ATCC 33889 / DSM 1251) (Thiomicrospira denitrificans (strain ATCC 33889 / DSM 1251)).